The primary structure comprises 341 residues: uncharacterized protein (341 aa).

Residue 58–82 (ITGGSSGIGAAAAKKIAEAGGTVVL) coordinates NADP(+). Position 194 (S194) interacts with substrate. Residue Y207 is the Proton acceptor of the active site. The segment at 309–329 (DSSAAKGSESQTDTSELDKRS) is disordered.

It belongs to the short-chain dehydrogenases/reductases (SDR) family.

This is an uncharacterized protein from Mycobacterium bovis (strain ATCC BAA-935 / AF2122/97).